The following is a 97-amino-acid chain: UPF0235 protein DET1292 (97 aa).

It belongs to the UPF0235 family.

The polypeptide is UPF0235 protein DET1292 (Dehalococcoides mccartyi (strain ATCC BAA-2266 / KCTC 15142 / 195) (Dehalococcoides ethenogenes (strain 195))).